A 266-amino-acid chain; its full sequence is Movement protein (266 aa).

Residues 211-244 (SKTGKKFSSKSENNSGNNRPKPDKNQRKEKGLKV) are disordered. A compositionally biased stretch (basic and acidic residues) spans 230-244 (PKPDKNQRKEKGLKV).

The protein belongs to the tobamovirus movement protein family. Binds to host RBCS at the plasmodesmata; this interaction seems required for viral systemic movement.

It is found in the host cytoplasm. Its subcellular location is the host cytoskeleton. The protein resides in the host cell junction. The protein localises to the host plasmodesma. In terms of biological role, transports viral genome to neighboring plant cells directly through plasmosdesmata, without any budding. The movement protein allows efficient cell to cell propagation, by bypassing the host cell wall barrier. Forms a ribonucleoprotein complex with viral RNA. Binds microtubules and modulates microtubule stability. Can bind double-stranded DNA. Evades host resistance (R) protein (e.g. tomato ToMV resistance protein TM-2(2), AC Q71BG9) in ToMV/TMV resistant plants. The chain is Movement protein (MP) from Tomato brown rugose fruit virus (isolate TOBRFV/Tomato/Jordan/Tom1-Jo/2015) (ToBRFV).